The chain runs to 394 residues: GTPase Obg (394 aa).

Positions Ser-4 to Leu-162 constitute an Obg domain. The OBG-type G domain occupies Ala-163–Asn-329. GTP-binding positions include Gly-169–Ser-176, Phe-194–Glu-198, Asp-216–Gly-219, Thr-283–Asp-286, and Ser-310–Val-312. 2 residues coordinate Mg(2+): Ser-176 and Thr-196. A disordered region spans residues Lys-358–Lys-394. The segment covering Gly-361 to Lys-394 has biased composition (acidic residues).

Belongs to the TRAFAC class OBG-HflX-like GTPase superfamily. OBG GTPase family. Monomer. The cofactor is Mg(2+).

It is found in the cytoplasm. Functionally, an essential GTPase which binds GTP, GDP and possibly (p)ppGpp with moderate affinity, with high nucleotide exchange rates and a fairly low GTP hydrolysis rate. Plays a role in control of the cell cycle, stress response, ribosome biogenesis and in those bacteria that undergo differentiation, in morphogenesis control. This Phocaeicola vulgatus (strain ATCC 8482 / DSM 1447 / JCM 5826 / CCUG 4940 / NBRC 14291 / NCTC 11154) (Bacteroides vulgatus) protein is GTPase Obg.